A 191-amino-acid chain; its full sequence is ATP synthase subunit b (191 aa).

Residues 10-30 (FLVPGPTAIAELIVFLLILFI) traverse the membrane as a helical segment. Positions 170–191 (RAQRQPAASDVVGGQQREEVHR) are disordered.

Belongs to the ATPase B chain family. In terms of assembly, F-type ATPases have 2 components, F(1) - the catalytic core - and F(0) - the membrane proton channel. F(1) has five subunits: alpha(3), beta(3), gamma(1), delta(1), epsilon(1). F(0) has three main subunits: a(1), b(2) and c(10-14). The alpha and beta chains form an alternating ring which encloses part of the gamma chain. F(1) is attached to F(0) by a central stalk formed by the gamma and epsilon chains, while a peripheral stalk is formed by the delta and b chains.

It localises to the cell membrane. F(1)F(0) ATP synthase produces ATP from ADP in the presence of a proton or sodium gradient. F-type ATPases consist of two structural domains, F(1) containing the extramembraneous catalytic core and F(0) containing the membrane proton channel, linked together by a central stalk and a peripheral stalk. During catalysis, ATP synthesis in the catalytic domain of F(1) is coupled via a rotary mechanism of the central stalk subunits to proton translocation. In terms of biological role, component of the F(0) channel, it forms part of the peripheral stalk, linking F(1) to F(0). In Acidothermus cellulolyticus (strain ATCC 43068 / DSM 8971 / 11B), this protein is ATP synthase subunit b.